We begin with the raw amino-acid sequence, 464 residues long: MPPPSLLHLHSRAPLQPRPFRMNSRAAPSRVVVCSVASAEGFISAAPILLPDGPWKQVEGGVTAAKGFKAAGIYGGLRAKGEKPDLALVTCDVDATVAGTFTTNVVAAAPVLYCKHALSTSKTGRAVLINAGQANAATGDLGYQDAVDSADAVAKLLNVSTDNILIQSTGVIGQRIKKEALLNSLPRLVGSLSSSVQGANSAAVAITTTDLVSKSIAVQTEIGGVAIRIGGMAKGSGMIHPNMATMLGVLTTDAQVSNDVWREMVRTSVSRSFNQITVDGDTSTNDCVIAMASGLSGLSRIQSLDSIEAQQFQACLDAVMQGLAKSIAWDGEGATCLIEVTVSGANNEAEAAKIARSVASSSLVKAAVFGRDPNWGRIACSVGYSGIQFDANRLDISLGVIPLMKNGQPLPFDRSAASRYLKDAGDAHGTVNIDISVGSGGGNGKAWGCDLSYKYVEINAEYTT.

Positions 208, 234, 245, 332, 459, and 464 each coordinate substrate. Catalysis depends on Thr-245, which acts as the Nucleophile.

Belongs to the ArgJ family. Heterodimer of an alpha and a beta chain.

It is found in the plastid. The protein localises to the chloroplast. It catalyses the reaction N(2)-acetyl-L-ornithine + L-glutamate = N-acetyl-L-glutamate + L-ornithine. The enzyme catalyses L-glutamate + acetyl-CoA = N-acetyl-L-glutamate + CoA + H(+). The protein operates within amino-acid biosynthesis; L-arginine biosynthesis; L-ornithine and N-acetyl-L-glutamate from L-glutamate and N(2)-acetyl-L-ornithine (cyclic): step 1/1. It functions in the pathway amino-acid biosynthesis; L-arginine biosynthesis; N(2)-acetyl-L-ornithine from L-glutamate: step 1/4. Catalyzes two activities which are involved in the cyclic version of arginine biosynthesis: the synthesis of acetylglutamate from glutamate and acetyl-CoA, and of ornithine by transacetylation between acetylornithine and glutamate. This Sorghum bicolor (Sorghum) protein is Arginine biosynthesis bifunctional protein ArgJ, chloroplastic.